The sequence spans 374 residues: Ribosomal RNA large subunit methyltransferase G (374 aa).

It belongs to the methyltransferase superfamily. RlmG family.

It is found in the cytoplasm. The catalysed reaction is guanosine(1835) in 23S rRNA + S-adenosyl-L-methionine = N(2)-methylguanosine(1835) in 23S rRNA + S-adenosyl-L-homocysteine + H(+). In terms of biological role, specifically methylates the guanine in position 1835 (m2G1835) of 23S rRNA. In Pseudomonas paraeruginosa (strain DSM 24068 / PA7) (Pseudomonas aeruginosa (strain PA7)), this protein is Ribosomal RNA large subunit methyltransferase G.